A 330-amino-acid polypeptide reads, in one-letter code: Phosphatidylglycerol--prolipoprotein diacylglyceryl transferase (330 aa).

3 helical membrane passes run leucine 22–glycine 42, tyrosine 57–alanine 77, and isoleucine 97–leucine 117. Arginine 145 serves as a coordination point for a 1,2-diacyl-sn-glycero-3-phospho-(1'-sn-glycerol). 2 consecutive transmembrane segments (helical) span residues valine 193–isoleucine 213 and isoleucine 257–proline 277.

The protein belongs to the Lgt family.

It localises to the cell membrane. It catalyses the reaction L-cysteinyl-[prolipoprotein] + a 1,2-diacyl-sn-glycero-3-phospho-(1'-sn-glycerol) = an S-1,2-diacyl-sn-glyceryl-L-cysteinyl-[prolipoprotein] + sn-glycerol 1-phosphate + H(+). The protein operates within protein modification; lipoprotein biosynthesis (diacylglyceryl transfer). In terms of biological role, catalyzes the transfer of the diacylglyceryl group from phosphatidylglycerol to the sulfhydryl group of the N-terminal cysteine of a prolipoprotein, the first step in the formation of mature lipoproteins. This Mycobacterium leprae (strain Br4923) protein is Phosphatidylglycerol--prolipoprotein diacylglyceryl transferase.